The following is a 180-amino-acid chain: NAD(P)H-quinone oxidoreductase subunit I, chloroplastic (180 aa).

4Fe-4S ferredoxin-type domains are found at residues 55-84 (GRIH…VDWK) and 95-124 (LNYS…MTEE). Residues cysteine 64, cysteine 67, cysteine 70, cysteine 74, cysteine 104, cysteine 107, cysteine 110, and cysteine 114 each contribute to the [4Fe-4S] cluster site.

This sequence belongs to the complex I 23 kDa subunit family. NDH is composed of at least 16 different subunits, 5 of which are encoded in the nucleus. [4Fe-4S] cluster is required as a cofactor.

Its subcellular location is the plastid. The protein resides in the chloroplast thylakoid membrane. The catalysed reaction is a plastoquinone + NADH + (n+1) H(+)(in) = a plastoquinol + NAD(+) + n H(+)(out). It carries out the reaction a plastoquinone + NADPH + (n+1) H(+)(in) = a plastoquinol + NADP(+) + n H(+)(out). Its function is as follows. NDH shuttles electrons from NAD(P)H:plastoquinone, via FMN and iron-sulfur (Fe-S) centers, to quinones in the photosynthetic chain and possibly in a chloroplast respiratory chain. The immediate electron acceptor for the enzyme in this species is believed to be plastoquinone. Couples the redox reaction to proton translocation, and thus conserves the redox energy in a proton gradient. This is NAD(P)H-quinone oxidoreductase subunit I, chloroplastic from Sorghum bicolor (Sorghum).